The primary structure comprises 1341 residues: Restriction of telomere capping protein 1 (1341 aa).

A disordered region spans residues 1–39 (MSLSPHVENASIPKGSTPIPKNRNVSSIGKGEFLGSSSS). WD repeat units lie at residues 207–248 (NKFS…SIDN), 256–296 (EHTR…SKSS), 305–342 (TASD…YKFA), 367–406 (AHTG…NAAE), 439–486 (NTGY…IPKH), and 489–527 (LSET…TVLE). Disordered regions lie at residues 559-593 (PELQ…IGGI), 600-619 (TGLT…GPTF), 630-651 (ASSF…ENRE), 736-765 (KNAT…DDDD), and 789-830 (NEKV…DRAR). Residues 630 to 644 (ASSFNSSSASLTSLT) are compositionally biased toward low complexity. A compositionally biased stretch (acidic residues) spans 753–765 (DDGDDDDDDDDDD). A compositionally biased stretch (low complexity) spans 814–823 (SSISSISASR). Residues 843–883 (KIQTLVDLISIATHNASVYLSIDDLTNFKIWILIRDSLLWD) form a WD 7 repeat. 2 disordered regions span residues 941–962 (AFRA…KLKE) and 1013–1043 (DEHE…KSIP). Basic and acidic residues-rich tracts occupy residues 951–962 (DAEKKPVSKLKE) and 1015–1027 (HEHQ…HDSP). Phosphoserine is present on residues Ser-1036, Ser-1080, Ser-1087, Ser-1089, Ser-1123, and Ser-1133. 2 WD repeats span residues 1129–1169 (SRPD…KQLY) and 1216–1255 (LFGI…LITN). The segment at 1293-1335 (CVLCERPLKKLTMVILPCGHEGHFQCIQEWFLDENEQECPGGC) adopts an RING-type; degenerate zinc-finger fold.

It belongs to the WD repeat RTC1 family. Component of the SEA complex composed of at least IML1/SEA1, RTC1/SEA2, MTC5/SEA3, NPR2, NPR3, SEA4, SEC13 and SEH1. Interacts with ribosomes.

The protein localises to the vacuole membrane. Its function is as follows. Component of the SEA complex which coats the vacuolar membrane and is involved in intracellular trafficking, autophagy, response to nitrogen starvation, and amino acid biogenesis. May be involved in a process influencing telomere capping. The chain is Restriction of telomere capping protein 1 (RTC1) from Saccharomyces cerevisiae (strain ATCC 204508 / S288c) (Baker's yeast).